The following is a 543-amino-acid chain: Protein male-specific lethal-3 (543 aa).

Residues 10-90 (LFNRGEKVLC…KLQRELAEAA (81 aa)) form the Chromo domain. The segment at 93–247 (QKTGGYSYKD…THTTDAEKRI (155 aa)) is disordered. 3 stretches are compositionally biased toward basic and acidic residues: residues 180–202 (RSRDGSGNRSRDGSGNRSRDNSS), 210–224 (KSKGGDKNDDGERRS), and 234–247 (SPKDTHTTDAEKRI). The MRG domain maps to 249–542 (QEDRVMLRIS…PLIDQGRELS (294 aa)).

As to quaternary structure, component of the male-specific lethal (MSL) histone acetyltransferase complex, composed of mof, mle, msl-1, msl-2 and msl-3 proteins, as well as roX1 and roX2 non-coding RNAs. Post-translationally, ubiquitinated by msl-2.

It localises to the nucleus. The protein resides in the chromosome. In terms of biological role, component of the male-specific lethal (MSL) histone acetyltransferase complex, a multiprotein complex essential for elevating transcription of the single X chromosome in the male (X chromosome dosage compensation). The MSL complex specifically associates with the single X chromosome in males and mediates formation of H4K16ac, promoting a two-fold activation of X chromosome. Acts as a histone reader that specifically recognizes and binds histone H3 trimethylated at 'Lys-36' (H3K36me3) and histone H4 monomethylated at 'Lys-20' (H4K20me1). Within the MSL complex, mediates the spreading of the MSL complex from initiation sites on the male X chromosome to flanking chromatin. Following initial recruitment of the MSL complex to male X chromosome by msl-2, msl-3 binds H3K36me3 and promotes spreading of the MSL complex in cis. In addition to its role in dosage compensation in males, promotes germline stem cell differentiation in females: recognizes and binds H3K36me3, promoting recruitment of the ATAC complex and transcription of genes, such as RpS19b. The sequence is that of Protein male-specific lethal-3 (msl-3) from Drosophila virilis (Fruit fly).